The primary structure comprises 543 residues: Acrosin-binding protein (543 aa).

The N-terminal stretch at 1–25 (MRKPAAGFLPSLLKVLLLPLAPAAA) is a signal peptide. Residues 26–106 (QDSTQASTPG…ASWFESFCQF (81 aa)) form a pro-ACR binding region. Residues 26–273 (QDSTQASTPG…NPSSFAPRVR (248 aa)) constitute a propeptide, removed in mature form. Residues 185–272 (SLGGQEQAPE…SNPSSFAPRV (88 aa)) are disordered. The segment covering 192 to 220 (APEHKQEQGVEHRQEPTQEHKQEEGQKQE) has biased composition (basic and acidic residues). Over residues 221–231 (EQEEEQEEEGK) the composition is skewed to acidic residues. Basic and acidic residues predominate over residues 232–243 (QEEGQGTKEGRE). Residues 319-427 (LPHTEALLVL…NQVGSPESGR (109 aa)) form a pro-ACR binding region.

In terms of assembly, binds proacrosin (pro-ACR). Does not bind the mature form of ACR. Post-translationally, phosphorylated on Tyr residues in capacitated sperm. The N-terminus is blocked. In terms of processing, synthesized as a 60-kDa precursor, the 32-kDa mature form is post-translationally produced by the removal of the N-terminal half of the precursor during sperm maturation in the testis and/or epididymis. In terms of tissue distribution, expression restricted to testis in normal tissue. Expressed in a wide spectrum of cancers, including bladder, breast, liver, lung and colon cancers.

The protein resides in the secreted. It is found in the cytoplasmic vesicle. Its subcellular location is the secretory vesicle. It localises to the acrosome. Acrosomal protein that maintains proacrosin (pro-ACR) as an enzymatically inactive zymogen in the acrosome. Involved also in the acrosome formation. The protein is Acrosin-binding protein of Homo sapiens (Human).